Reading from the N-terminus, the 334-residue chain is Protein-methionine-sulfoxide reductase catalytic subunit MsrP (334 aa).

Positions 1 to 44 (MKKIRPLTEADVTAESAFFMQRRQVLKALGISAAALSLPSTAQA) form a signal peptide, tat-type signal. Mo-molybdopterin is bound by residues Asn88, 91-92 (YE), Cys146, Thr181, Asn233, Arg238, and 249-251 (GIK).

This sequence belongs to the MsrP family. In terms of assembly, heterodimer of a catalytic subunit (MsrP) and a heme-binding subunit (MsrQ). The cofactor is Mo-molybdopterin. Predicted to be exported by the Tat system. The position of the signal peptide cleavage has not been experimentally proven.

The protein localises to the periplasm. The catalysed reaction is L-methionyl-[protein] + a quinone + H2O = L-methionyl-(S)-S-oxide-[protein] + a quinol. It carries out the reaction L-methionyl-[protein] + a quinone + H2O = L-methionyl-(R)-S-oxide-[protein] + a quinol. Functionally, part of the MsrPQ system that repairs oxidized periplasmic proteins containing methionine sulfoxide residues (Met-O), using respiratory chain electrons. Thus protects these proteins from oxidative-stress damage caused by reactive species of oxygen and chlorine generated by the host defense mechanisms. MsrPQ is essential for the maintenance of envelope integrity under bleach stress, rescuing a wide series of structurally unrelated periplasmic proteins from methionine oxidation, including the primary periplasmic chaperone SurA and the lipoprotein Pal. The catalytic subunit MsrP is non-stereospecific, being able to reduce both (R-) and (S-) diastereoisomers of methionine sulfoxide. This chain is Protein-methionine-sulfoxide reductase catalytic subunit MsrP, found in Salmonella dublin (strain CT_02021853).